A 100-amino-acid chain; its full sequence is Small ubiquitin-related modifier 1 (100 aa).

In terms of domain architecture, Ubiquitin-like spans 19–96 (EYIKLKVIGQ…IEVYQEQTGG (78 aa)). Residue glycine 96 forms a Glycyl lysine isopeptide (Gly-Lys) (interchain with K-? in acceptor proteins) linkage. Positions 97 to 100 (CRND) are excised as a propeptide.

Belongs to the ubiquitin family. SUMO subfamily. In terms of assembly, interacts with sae2, ube2i, ranbp2, pias1 and pias2. Covalently attached to a number of proteins. Post-translationally, cleavage of precursor form by a sentrin-specific protease is necessary for function.

It localises to the nucleus membrane. The protein resides in the nucleus speckle. Its subcellular location is the cytoplasm. It is found in the nucleus. The protein localises to the PML body. It localises to the cell membrane. Functionally, ubiquitin-like protein that can be covalently attached to proteins as a monomer or a lysine-linked polymer. Covalent attachment via an isopeptide bond to its substrates requires prior activation by the E1 complex sae1-sae2 and linkage to the E2 enzyme ube2i. This post-translational modification on lysine residues of proteins plays a crucial role in a number of cellular processes such as nuclear transport, DNA replication and repair, mitosis and signal transduction. Polymeric sumo1 chains are also susceptible to polyubiquitination which functions as a signal for proteasomal degradation of modified proteins. In Danio rerio (Zebrafish), this protein is Small ubiquitin-related modifier 1 (sumo1).